We begin with the raw amino-acid sequence, 248 residues long: Pyridoxine 5'-phosphate synthase (248 aa).

Residue N9 coordinates 3-amino-2-oxopropyl phosphate. 11–12 (DH) is a binding site for 1-deoxy-D-xylulose 5-phosphate. R20 is a binding site for 3-amino-2-oxopropyl phosphate. H45 functions as the Proton acceptor in the catalytic mechanism. Residues R47 and H52 each coordinate 1-deoxy-D-xylulose 5-phosphate. Catalysis depends on E72, which acts as the Proton acceptor. T102 is a 1-deoxy-D-xylulose 5-phosphate binding site. H193 (proton donor) is an active-site residue. 3-amino-2-oxopropyl phosphate is bound by residues G194 and 215-216 (GH).

This sequence belongs to the PNP synthase family. Homooctamer; tetramer of dimers.

The protein resides in the cytoplasm. The enzyme catalyses 3-amino-2-oxopropyl phosphate + 1-deoxy-D-xylulose 5-phosphate = pyridoxine 5'-phosphate + phosphate + 2 H2O + H(+). The protein operates within cofactor biosynthesis; pyridoxine 5'-phosphate biosynthesis; pyridoxine 5'-phosphate from D-erythrose 4-phosphate: step 5/5. Its function is as follows. Catalyzes the complicated ring closure reaction between the two acyclic compounds 1-deoxy-D-xylulose-5-phosphate (DXP) and 3-amino-2-oxopropyl phosphate (1-amino-acetone-3-phosphate or AAP) to form pyridoxine 5'-phosphate (PNP) and inorganic phosphate. This is Pyridoxine 5'-phosphate synthase from Hydrogenovibrio crunogenus (strain DSM 25203 / XCL-2) (Thiomicrospira crunogena).